A 217-amino-acid chain; its full sequence is MAISPVLFIGLIYLAGGGSLFPGVEAIWLTVPESGERCVYEEIQANVVVVLDYICIDDAFTQLGPTLDVRVTSPYGKELYKIANVTHGQAAFTTSESGTFLACLAMHHDQSHHSVNSSVIVSLDWKMGIRAKDWDSVAKKEKIEGVELEIRRSTEYASAIRANILYLRIREAYMREINEKTNTRVNQLGLMSLGVAIVVSISQVLYLKRYFLKKKLI.

The first 26 residues, 1–26 (MAISPVLFIGLIYLAGGGSLFPGVEA), serve as a signal peptide directing secretion. The Lumenal portion of the chain corresponds to 27–186 (IWLTVPESGE…INEKTNTRVN (160 aa)). Residues 36-152 (ERCVYEEIQA…IEGVELEIRR (117 aa)) enclose the GOLD domain. Residues Asn-84 and Asn-116 are each glycosylated (N-linked (GlcNAc...) asparagine). The stretch at 138–160 (AKKEKIEGVELEIRRSTEYASAI) forms a coiled coil. Omega-N-methylated arginine is present on residues Arg-170 and Arg-175. A helical transmembrane segment spans residues 187–207 (QLGLMSLGVAIVVSISQVLYL). The Cytoplasmic portion of the chain corresponds to 208–217 (KRYFLKKKLI). A COPII vesicle coat-binding motif is present at residues 210–211 (YF). The COPI vesicle coat-binding signature appears at 210 to 217 (YFLKKKLI).

This sequence belongs to the EMP24/GP25L family. Probably oligomerizes with other members of the EMP24/GP25L family. Associates with the COPI vesicle coat (coatomer). Associates with the COPII vesicle coat (coatomer).

Its subcellular location is the endoplasmic reticulum membrane. Involved in vesicular protein trafficking. Mainly functions in the early secretory pathway. Thought to act as cargo receptor at the lumenal side for incorporation of secretory cargo molecules into transport vesicles and to be involved in vesicle coat formation at the cytoplasmic side. This chain is Transmembrane emp24 domain-containing protein p24delta6, found in Arabidopsis thaliana (Mouse-ear cress).